A 91-amino-acid polypeptide reads, in one-letter code: PqqA binding protein (91 aa).

It belongs to the PqqD family. In terms of assembly, monomer. Interacts with PqqE.

Its pathway is cofactor biosynthesis; pyrroloquinoline quinone biosynthesis. In terms of biological role, functions as a PqqA binding protein and presents PqqA to PqqE, in the pyrroloquinoline quinone (PQQ) biosynthetic pathway. This is PqqA binding protein from Pseudomonas fluorescens (strain SBW25).